The following is a 100-amino-acid chain: Small ribosomal subunit protein uS14c (100 aa).

It belongs to the universal ribosomal protein uS14 family. Part of the 30S ribosomal subunit.

The protein localises to the plastid. It localises to the chloroplast. Functionally, binds 16S rRNA, required for the assembly of 30S particles. The sequence is that of Small ribosomal subunit protein uS14c from Chloranthus spicatus (Chulantree).